A 555-amino-acid polypeptide reads, in one-letter code: Glutamate--tRNA ligase (555 aa).

Residues 100–110 (PNPSGPLHIGH) carry the 'HIGH' region motif.

Belongs to the class-I aminoacyl-tRNA synthetase family. Glutamate--tRNA ligase type 2 subfamily.

Its subcellular location is the cytoplasm. The enzyme catalyses tRNA(Glu) + L-glutamate + ATP = L-glutamyl-tRNA(Glu) + AMP + diphosphate. Catalyzes the attachment of glutamate to tRNA(Glu) in a two-step reaction: glutamate is first activated by ATP to form Glu-AMP and then transferred to the acceptor end of tRNA(Glu). This is Glutamate--tRNA ligase from Methanococcus maripaludis (strain DSM 14266 / JCM 13030 / NBRC 101832 / S2 / LL).